Reading from the N-terminus, the 429-residue chain is 3-phosphoshikimate 1-carboxyvinyltransferase (429 aa).

Residues lysine 21, serine 22, and arginine 26 each coordinate 3-phosphoshikimate. Position 21 (lysine 21) interacts with phosphoenolpyruvate. 2 residues coordinate phosphoenolpyruvate: glycine 94 and arginine 122. 4 residues coordinate 3-phosphoshikimate: serine 167, glutamine 169, aspartate 315, and lysine 342. Glutamine 169 provides a ligand contact to phosphoenolpyruvate. The Proton acceptor role is filled by aspartate 315. The phosphoenolpyruvate site is built by arginine 346 and arginine 388.

Belongs to the EPSP synthase family. Monomer.

The protein localises to the cytoplasm. The catalysed reaction is 3-phosphoshikimate + phosphoenolpyruvate = 5-O-(1-carboxyvinyl)-3-phosphoshikimate + phosphate. Its pathway is metabolic intermediate biosynthesis; chorismate biosynthesis; chorismate from D-erythrose 4-phosphate and phosphoenolpyruvate: step 6/7. Catalyzes the transfer of the enolpyruvyl moiety of phosphoenolpyruvate (PEP) to the 5-hydroxyl of shikimate-3-phosphate (S3P) to produce enolpyruvyl shikimate-3-phosphate and inorganic phosphate. This Desulforudis audaxviator (strain MP104C) protein is 3-phosphoshikimate 1-carboxyvinyltransferase.